Here is a 449-residue protein sequence, read N- to C-terminus: Tubulin beta-4 chain (449 aa).

The MREI motif signature appears at 1 to 4 (MREI). Glutamine 11, glutamate 69, serine 138, glycine 142, threonine 143, glycine 144, asparagine 204, and asparagine 226 together coordinate GTP. A Mg(2+)-binding site is contributed by glutamate 69. The disordered stretch occupies residues 421–449 (EYQQYQDATAEEEGEMYEDDEEESEQGAK). The span at 429–449 (TAEEEGEMYEDDEEESEQGAK) shows a compositional bias: acidic residues. The residue at position 438 (glutamate 438) is a 5-glutamyl polyglutamate. Serine 444 bears the Phosphoserine mark.

This sequence belongs to the tubulin family. In terms of assembly, dimer of alpha and beta chains. A typical microtubule is a hollow water-filled tube with an outer diameter of 25 nm and an inner diameter of 15 nM. Alpha-beta heterodimers associate head-to-tail to form protofilaments running lengthwise along the microtubule wall with the beta-tubulin subunit facing the microtubule plus end conferring a structural polarity. Microtubules usually have 13 protofilaments but different protofilament numbers can be found in some organisms and specialized cells. It depends on Mg(2+) as a cofactor. Some glutamate residues at the C-terminus are polyglycylated, resulting in polyglycine chains on the gamma-carboxyl group. Glycylation is mainly limited to tubulin incorporated into axonemes (cilia and flagella) whereas glutamylation is prevalent in neuronal cells, centrioles, axonemes, and the mitotic spindle. Both modifications can coexist on the same protein on adjacent residues, and lowering polyglycylation levels increases polyglutamylation, and reciprocally. The precise function of polyglycylation is still unclear. Post-translationally, some glutamate residues at the C-terminus are polyglutamylated, resulting in polyglutamate chains on the gamma-carboxyl group. Polyglutamylation plays a key role in microtubule severing by spastin (SPAST). SPAST preferentially recognizes and acts on microtubules decorated with short polyglutamate tails: severing activity by SPAST increases as the number of glutamates per tubulin rises from one to eight, but decreases beyond this glutamylation threshold. Neuron specific.

It is found in the cytoplasm. The protein localises to the cytoskeleton. Its function is as follows. Tubulin is the major constituent of microtubules, a cylinder consisting of laterally associated linear protofilaments composed of alpha- and beta-tubulin heterodimers. Microtubules grow by the addition of GTP-tubulin dimers to the microtubule end, where a stabilizing cap forms. Below the cap, tubulin dimers are in GDP-bound state, owing to GTPase activity of alpha-tubulin. This chain is Tubulin beta-4 chain, found in Gallus gallus (Chicken).